A 41-amino-acid polypeptide reads, in one-letter code: uncharacterized protein (41 aa).

This is an uncharacterized protein from Dictyostelium discoideum (Social amoeba).